The following is a 99-amino-acid chain: Small ribosomal subunit protein bS6c (99 aa).

It belongs to the bacterial ribosomal protein bS6 family.

It localises to the plastid. It is found in the chloroplast. In terms of biological role, binds together with bS18 to 16S ribosomal RNA. This Cyanidioschyzon merolae (strain NIES-3377 / 10D) (Unicellular red alga) protein is Small ribosomal subunit protein bS6c.